We begin with the raw amino-acid sequence, 542 residues long: CTP synthase (542 aa).

The tract at residues 1 to 266 (MATNYIFVTG…DDFICQRFHL (266 aa)) is amidoligase domain. CTP is bound at residue S14. Residue S14 participates in UTP binding. Residues 15 to 20 (SLGKGI) and D72 contribute to the ATP site. Residues D72 and E140 each contribute to the Mg(2+) site. CTP contacts are provided by residues 147 to 149 (DIE), 187 to 192 (KTKPTQ), and K223. Residues 187-192 (KTKPTQ) and K223 contribute to the UTP site. Residue 239–241 (KDV) coordinates ATP. One can recognise a Glutamine amidotransferase type-1 domain in the interval 291-542 (VIGMVGKYTE…VKAAKDNQKK (252 aa)). Position 352 (G352) interacts with L-glutamine. Catalysis depends on C379, which acts as the Nucleophile; for glutamine hydrolysis. L-glutamine is bound by residues 380–383 (LGMQ), E403, and R470. Active-site residues include H515 and E517.

This sequence belongs to the CTP synthase family. As to quaternary structure, homotetramer.

The enzyme catalyses UTP + L-glutamine + ATP + H2O = CTP + L-glutamate + ADP + phosphate + 2 H(+). It carries out the reaction L-glutamine + H2O = L-glutamate + NH4(+). It catalyses the reaction UTP + NH4(+) + ATP = CTP + ADP + phosphate + 2 H(+). It participates in pyrimidine metabolism; CTP biosynthesis via de novo pathway; CTP from UDP: step 2/2. With respect to regulation, allosterically activated by GTP, when glutamine is the substrate; GTP has no effect on the reaction when ammonia is the substrate. The allosteric effector GTP functions by stabilizing the protein conformation that binds the tetrahedral intermediate(s) formed during glutamine hydrolysis. Inhibited by the product CTP, via allosteric rather than competitive inhibition. Its function is as follows. Catalyzes the ATP-dependent amination of UTP to CTP with either L-glutamine or ammonia as the source of nitrogen. Regulates intracellular CTP levels through interactions with the four ribonucleotide triphosphates. This Pasteurella multocida (strain Pm70) protein is CTP synthase.